The following is a 499-amino-acid chain: Cobyric acid synthase (499 aa).

Positions 251-442 (SLDIAVVSLK…LHGVFDNLEW (192 aa)) constitute a GATase cobBQ-type domain. The active-site Nucleophile is the cysteine 332. Histidine 434 is an active-site residue.

It belongs to the CobB/CobQ family. CobQ subfamily.

It participates in cofactor biosynthesis; adenosylcobalamin biosynthesis. Functionally, catalyzes amidations at positions B, D, E, and G on adenosylcobyrinic A,C-diamide. NH(2) groups are provided by glutamine, and one molecule of ATP is hydrogenolyzed for each amidation. This chain is Cobyric acid synthase, found in Streptococcus sanguinis (strain SK36).